A 189-amino-acid chain; its full sequence is Histidinol-phosphate aminotransferase (189 aa).

Belongs to the class-II pyridoxal-phosphate-dependent aminotransferase family. Histidinol-phosphate aminotransferase subfamily. In terms of assembly, homodimer. Requires pyridoxal 5'-phosphate as cofactor.

It carries out the reaction L-histidinol phosphate + 2-oxoglutarate = 3-(imidazol-4-yl)-2-oxopropyl phosphate + L-glutamate. Its pathway is amino-acid biosynthesis; L-histidine biosynthesis; L-histidine from 5-phospho-alpha-D-ribose 1-diphosphate: step 7/9. The polypeptide is Histidinol-phosphate aminotransferase (hisC) (Thiocapsa roseopersicina).